A 44-amino-acid polypeptide reads, in one-letter code: Poly-ADP-ribosylation-amplifying and CtIP-maintaining micropeptide (44 aa).

The disordered stretch occupies residues 1–44 (MAASGGTKKAQSGGRRLREPSSRPSRRARQRPRRGALRKAGRFL). Basic residues predominate over residues 24–44 (PSRRARQRPRRGALRKAGRFL).

In terms of assembly, interacts with KLHL15; preventing ubiquitination and degradation of RBBP8/CtIP. Interacts with PARP1.

The protein resides in the nucleus. Its subcellular location is the nucleolus. It is found in the chromosome. Its function is as follows. Micropeptide that acts as a regulator of DNA repair both by preventing KLHL15-mediated ubiquitination and degradation of RBBP8/CtIP, and by promoting the poly-ADP-ribosyltransferase activity of PARP1. Prevents KLHL15-mediated ubiquitination of RBBP8/CtIP by competitively blocking the association between KLHL15 and RBBP8/CtIP. Recruited to DNA damage sites via association with poly-ADP-ribose chains, and enhances the poly-ADP-ribosyltransferase activity of PARP1. This Homo sapiens (Human) protein is Poly-ADP-ribosylation-amplifying and CtIP-maintaining micropeptide.